The primary structure comprises 547 residues: DNA polymerase kappa (547 aa).

Residues 18–39 (LTIEDDGSSSSDEEATLKRRLA) form a disordered region. Residues 20–31 (IEDDGSSSSDEE) are compositionally biased toward acidic residues. One can recognise a UmuC domain in the interval 132 to 316 (IVHVDCDAFY…LPVREVSGIG (185 aa)). Mg(2+) contacts are provided by Asp-136 and Asp-226. The UBZ4-type zinc-finger motif lies at 489-518 (TVPCPVCQKNIENELGILNQHVDLCLNVET). The Zn(2+) site is built by Cys-492, Cys-495, His-509, and Cys-513.

In terms of assembly, interacts with hus1 and rad17.

It localises to the cytoplasm. Its subcellular location is the nucleus. It carries out the reaction DNA(n) + a 2'-deoxyribonucleoside 5'-triphosphate = DNA(n+1) + diphosphate. In terms of biological role, DNA polymerase specifically involved in DNA repair. Plays an important role in translesion synthesis, where the normal high-fidelity DNA polymerases cannot proceed and DNA synthesis stalls. Has a role in meiosis. In Schizosaccharomyces pombe (strain 972 / ATCC 24843) (Fission yeast), this protein is DNA polymerase kappa (mug40).